Here is a 537-residue protein sequence, read N- to C-terminus: Quadr-hydrophobin (537 aa).

The first 17 residues, 1–17, serve as a signal peptide directing secretion; the sequence is MKFITVAAALFASTSLA. Hydrophobin regions lie at residues 63-199, 200-299, 300-421, and 422-537; these read GGNP…QNPI, GGNP…ENPT, GGNP…QDPL, and GGNP…RAII. N-linked (GlcNAc...) asparagine glycosylation is found at Asn-70 and Asn-113. 16 cysteine pairs are disulfide-bonded: Cys-134-Cys-183, Cys-144-Cys-174, Cys-145-Cys-157, Cys-184-Cys-195, Cys-234-Cys-283, Cys-244-Cys-274, Cys-245-Cys-257, Cys-284-Cys-295, Cys-356-Cys-405, Cys-366-Cys-396, Cys-367-Cys-379, Cys-406-Cys-417, Cys-471-Cys-520, Cys-481-Cys-511, Cys-482-Cys-494, and Cys-521-Cys-532.

The protein belongs to the cerato-ulmin hydrophobin family. As to quaternary structure, homotetramer. Further self-assembles to form highly ordered films at water-air interfaces through intermolecular interactions.

It localises to the secreted. The protein localises to the cell wall. In terms of biological role, aerial growth, conidiation, and dispersal of filamentous fungi in the environment rely upon a capability of their secreting small amphipathic proteins called hydrophobins (HPBs) with low sequence identity. Class I can self-assemble into an outermost layer of rodlet bundles on aerial cell surfaces, conferring cellular hydrophobicity that supports fungal growth, development and dispersal; whereas Class II form highly ordered films at water-air interfaces through intermolecular interactions but contribute nothing to the rodlet structure. This is Quadr-hydrophobin from Cordyceps militaris (Caterpillar fungus).